The chain runs to 338 residues: UDP-glucose 4-epimerase (338 aa).

NAD(+)-binding positions include 11-12, 31-36, 58-59, 80-84, N99, S124, Y149, K153, and F178; these read YI, DNLCNS, DI, and FAGLK. 2 residues coordinate substrate: S124 and Y149. The active-site Proton acceptor is the Y149. Residues N179, 199–200, 216–218, R231, and 292–295 contribute to the substrate site; these read NL, SVF, and RSGD.

Belongs to the NAD(P)-dependent epimerase/dehydratase family. In terms of assembly, homodimer. NAD(+) serves as cofactor.

The catalysed reaction is UDP-alpha-D-glucose = UDP-alpha-D-galactose. It functions in the pathway carbohydrate metabolism; galactose metabolism. Its function is as follows. Involved in the metabolism of galactose. Catalyzes the conversion of UDP-galactose (UDP-Gal) to UDP-glucose (UDP-Glc) through a mechanism involving the transient reduction of NAD. By controlling the internal galactose concentration, it may be linked to the biosynthesis of lipopolysaccharide surface molecules, which are important for the pathogenesis of H.influenzae. This is UDP-glucose 4-epimerase (galE) from Haemophilus influenzae (strain ATCC 51907 / DSM 11121 / KW20 / Rd).